The following is a 339-amino-acid chain: Probable cytosolic iron-sulfur protein assembly protein CIAO1 (339 aa).

WD repeat units lie at residues 14 to 53, 59 to 98, 103 to 142, 148 to 187, 192 to 231, 250 to 289, and 301 to 339; these read HPDS…WICK, GHQR…FECV, GHEN…EYEC, SHTQ…WVCC, GHES…NEQG, FHSR…DPQQ, and AHSQ…PEGL. An LYR motif; required for interaction with HSC20 motif is present at residues 176–178; that stretch reads LYR.

This sequence belongs to the WD repeat CIA1 family. As to quaternary structure, component of the CIA complex. Interacts with CIAO2A and forms a complex with CIAO2B and MMS19; the interactions with CIAO2A and CIAO2B are mutually exclusive. Interacts with CHD1L, ERCC2, IREB2 and POLD1. Component of the MMXD complex, which includes CIAO1, ERCC2, CIAO2B, MMS19 and SLC25A5. Interacts with WT1. Interacts with CIAO3. Interacts (via LYR motif) with HSC20.

Its subcellular location is the cytoplasm. Key component of the cytosolic iron-sulfur protein assembly (CIA) complex, a multiprotein complex that mediates the incorporation of iron-sulfur cluster into extramitochondrial Fe/S proteins. As a CIA complex component, interacts specifically with CIAO2A or CIAO2B and MMS19 to assist different branches of iron-sulfur protein assembly, depending of its interactors. The complex CIAO1:CIAO2B:MMS19 binds to and facilitates the assembly of most cytosolic-nuclear Fe/S proteins. CIAO1:CIAO2A specifically matures ACO1 and stabilizes IREB2. Seems to specifically modulate the transactivation activity of WT1. As part of the mitotic spindle-associated MMXD complex it may play a role in chromosome segregation. This is Probable cytosolic iron-sulfur protein assembly protein CIAO1 from Homo sapiens (Human).